A 56-amino-acid polypeptide reads, in one-letter code: Large ribosomal subunit protein bL32c (56 aa).

This sequence belongs to the bacterial ribosomal protein bL32 family.

It localises to the plastid. Its subcellular location is the chloroplast. This chain is Large ribosomal subunit protein bL32c, found in Huperzia lucidula (Shining clubmoss).